A 351-amino-acid polypeptide reads, in one-letter code: Protein RecA (351 aa).

68 to 75 contacts ATP; it reads GPESSGKT.

It belongs to the RecA family.

It localises to the cytoplasm. Its function is as follows. Can catalyze the hydrolysis of ATP in the presence of single-stranded DNA, the ATP-dependent uptake of single-stranded DNA by duplex DNA, and the ATP-dependent hybridization of homologous single-stranded DNAs. It interacts with LexA causing its activation and leading to its autocatalytic cleavage. The chain is Protein RecA from Chloroflexus aggregans (strain MD-66 / DSM 9485).